The primary structure comprises 230 residues: Chalcone--flavanone isomerase (230 aa).

Substrate contacts are provided by T52, N117, and S194.

It belongs to the chalcone isomerase family.

The catalysed reaction is a chalcone = a flavanone.. It functions in the pathway secondary metabolite biosynthesis; flavonoid biosynthesis. Functionally, catalyzes the intramolecular cyclization of bicyclic chalcones into tricyclic (S)-flavanones. Responsible for the isomerization of 4,2',4',6'-tetrahydroxychalcone (also termed chalcone) into naringenin. The protein is Chalcone--flavanone isomerase (CHI) of Camellia sinensis (Tea plant).